The sequence spans 372 residues: Protein RecA (372 aa).

66 to 73 contributes to the ATP binding site; that stretch reads GPESSGKT. The tract at residues 328–359 is disordered; that stretch reads GVGVRPEEPTATESGPDAATAESAPAVPAPAT. The span at 345-359 shows a compositional bias: low complexity; the sequence is AATAESAPAVPAPAT.

The protein belongs to the RecA family.

Its subcellular location is the cytoplasm. Can catalyze the hydrolysis of ATP in the presence of single-stranded DNA, the ATP-dependent uptake of single-stranded DNA by duplex DNA, and the ATP-dependent hybridization of homologous single-stranded DNAs. It interacts with LexA causing its activation and leading to its autocatalytic cleavage. This Streptomyces ambofaciens protein is Protein RecA.